We begin with the raw amino-acid sequence, 689 residues long: Glycine--tRNA ligase beta subunit (689 aa).

Belongs to the class-II aminoacyl-tRNA synthetase family. Tetramer of two alpha and two beta subunits.

Its subcellular location is the cytoplasm. It carries out the reaction tRNA(Gly) + glycine + ATP = glycyl-tRNA(Gly) + AMP + diphosphate. The chain is Glycine--tRNA ligase beta subunit from Photorhabdus laumondii subsp. laumondii (strain DSM 15139 / CIP 105565 / TT01) (Photorhabdus luminescens subsp. laumondii).